We begin with the raw amino-acid sequence, 860 residues long: DNA mismatch repair protein MutS (860 aa).

Residue 618–625 (GPNMGGKS) coordinates ATP.

It belongs to the DNA mismatch repair MutS family.

Functionally, this protein is involved in the repair of mismatches in DNA. It is possible that it carries out the mismatch recognition step. This protein has a weak ATPase activity. This Hahella chejuensis (strain KCTC 2396) protein is DNA mismatch repair protein MutS.